Here is a 327-residue protein sequence, read N- to C-terminus: GMP reductase (327 aa).

Cysteine 175 (thioimidate intermediate) is an active-site residue. 204–227 contributes to the NADP(+) binding site; that stretch reads IIADGGIRTNGDVAKSIRFGATMV.

The protein belongs to the IMPDH/GMPR family. GuaC type 2 subfamily.

It carries out the reaction IMP + NH4(+) + NADP(+) = GMP + NADPH + 2 H(+). Catalyzes the irreversible NADPH-dependent deamination of GMP to IMP. It functions in the conversion of nucleobase, nucleoside and nucleotide derivatives of G to A nucleotides, and in maintaining the intracellular balance of A and G nucleotides. The protein is GMP reductase of Bacillus anthracis.